A 33-amino-acid polypeptide reads, in one-letter code: MAKRLLPVGLVVGEITKTDTINYRTFKPETGGL.

It belongs to the RNA polymerase beta' chain family. RpoC1 subfamily. In terms of assembly, in plastids the minimal PEP RNA polymerase catalytic core is composed of four subunits: alpha, beta, beta', and beta''. When a (nuclear-encoded) sigma factor is associated with the core the holoenzyme is formed, which can initiate transcription.

Its subcellular location is the plastid. The protein resides in the chloroplast. It carries out the reaction RNA(n) + a ribonucleoside 5'-triphosphate = RNA(n+1) + diphosphate. In terms of biological role, DNA-dependent RNA polymerase catalyzes the transcription of DNA into RNA using the four ribonucleoside triphosphates as substrates. The chain is DNA-directed RNA polymerase subunit beta' (rpoC1) from Heterosigma akashiwo (Chromophytic alga).